A 179-amino-acid chain; its full sequence is Replication restart protein DnaT (179 aa).

Residues 151–168 show a composition bias toward polar residues; it reads SRSSNGGMPQRDINSVSE. The segment at 151 to 179 is disordered; it reads SRSSNGGMPQRDINSVSEPDNHIPPGFRG.

It belongs to the DnaT family. Homooligomerizes. Interacts with PriB. Component of the replication restart primosome. Primosome assembly occurs via a 'hand-off' mechanism. PriA binds to replication forks, subsequently PriB then DnaT bind; DnaT then displaces ssDNA to generate the helicase loading substrate.

Involved in the restart of stalled replication forks, which reloads the replicative helicase on sites other than the origin of replication. Can function in multiple replication restart pathways. Displaces ssDNA from a PriB-ssDNA complex. Probably forms a spiral filament on ssDNA. The protein is Replication restart protein DnaT of Salmonella arizonae (strain ATCC BAA-731 / CDC346-86 / RSK2980).